The following is a 135-amino-acid chain: CDGSH iron-sulfur domain-containing protein 2B (135 aa).

Residues 1–37 (MVLETISKIIKTQLPAYLKKFPLPETIGGFARLTVLD) are Lumenal-facing. The chain crosses the membrane as a helical span at residues 38-60 (WLRLLPLLGILTLLGYLTIRPFL). Over 61-135 (PKKKKQKDSL…GPLILKKKII (75 aa)) the chain is Cytoplasmic. 4 residues coordinate [2Fe-2S] cluster: C99, C101, C110, and H114.

The protein belongs to the CISD protein family. CISD2 subfamily. As to quaternary structure, homodimer. It depends on [2Fe-2S] cluster as a cofactor.

Its subcellular location is the endoplasmic reticulum membrane. The protein localises to the mitochondrion outer membrane. Functionally, regulator of autophagy that contributes to antagonize becn1-mediated cellular autophagy at the endoplasmic reticulum. Participates in the interaction of bcl2 with becn1 and is required for bcl2-mediated depression of endoplasmic reticulum Ca(2+) stores during autophagy. The polypeptide is CDGSH iron-sulfur domain-containing protein 2B (cisd2b) (Oncorhynchus mykiss (Rainbow trout)).